The sequence spans 556 residues: Putative cysteine ligase BshC (556 aa).

Coiled coils occupy residues 408–442 (ILQKHELTLDDAFHRLDDLRQELLEREDRLGIAQA) and 468–513 (LGQV…ANLT).

This sequence belongs to the BshC family.

In terms of biological role, involved in bacillithiol (BSH) biosynthesis. May catalyze the last step of the pathway, the addition of cysteine to glucosamine malate (GlcN-Mal) to generate BSH. This is Putative cysteine ligase BshC from Symbiobacterium thermophilum (strain DSM 24528 / JCM 14929 / IAM 14863 / T).